A 444-amino-acid polypeptide reads, in one-letter code: MTILVLGINHKTASVALREKVAFSPEKRDLAFQQIAQSELAQSEVILSTCNRTEIYLHNKHISPEADQENQRWLEQCIQWFADVHQLDVDELRNCLYIKQNQSAVNHLMRVSCGLDSLVLGEPQILGQVKQAYQYSEDYCQAQHMPMSSEFSRLFQKTFSVAKRVRTETNIGNSAVSVAYAACSLARQIFEGLKDLNILLVGAGETIELVARHLLRHGVKKLMISNRTLARAELLVEKLEHNKYIQVLSLQQLQDGLNQADIVISSTGSPIVLITAEMVKQAQQKRRNAPMLIVDIAVPRDVDERVEKLDGVYHYTVDDLHSIIQRNLSEREKASKEAETIIDAEASDFFEWMKVHQFSNLIRTYRESAEQIRQDLLEKAVQAIGQNEDPETVLQELSYKLMNKLIHSPTQAMQAMMKQGSIQGLRSFSSALGIADKKERNPQK.

Substrate-binding positions include 49 to 52, Ser-117, 122 to 124, and Gln-128; these read TCNR and EPQ. Cys-50 serves as the catalytic Nucleophile. 202–207 serves as a coordination point for NADP(+); sequence GAGETI.

The protein belongs to the glutamyl-tRNA reductase family. In terms of assembly, homodimer.

It carries out the reaction (S)-4-amino-5-oxopentanoate + tRNA(Glu) + NADP(+) = L-glutamyl-tRNA(Glu) + NADPH + H(+). It functions in the pathway porphyrin-containing compound metabolism; protoporphyrin-IX biosynthesis; 5-aminolevulinate from L-glutamyl-tRNA(Glu): step 1/2. Functionally, catalyzes the NADPH-dependent reduction of glutamyl-tRNA(Glu) to glutamate 1-semialdehyde (GSA). This chain is Glutamyl-tRNA reductase, found in Mannheimia succiniciproducens (strain KCTC 0769BP / MBEL55E).